The sequence spans 498 residues: ATP synthase subunit alpha, chloroplastic (498 aa).

170–177 is a binding site for ATP; that stretch reads GDRQTGKT.

This sequence belongs to the ATPase alpha/beta chains family. As to quaternary structure, F-type ATPases have 2 components, CF(1) - the catalytic core - and CF(0) - the membrane proton channel. CF(1) has five subunits: alpha(3), beta(3), gamma(1), delta(1), epsilon(1). CF(0) has four main subunits: a, b, b' and c.

It is found in the plastid. Its subcellular location is the chloroplast thylakoid membrane. It catalyses the reaction ATP + H2O + 4 H(+)(in) = ADP + phosphate + 5 H(+)(out). Its function is as follows. Produces ATP from ADP in the presence of a proton gradient across the membrane. The alpha chain is a regulatory subunit. The polypeptide is ATP synthase subunit alpha, chloroplastic (Oltmannsiellopsis viridis (Marine flagellate)).